The primary structure comprises 218 residues: 2-C-methyl-D-erythritol 4-phosphate cytidylyltransferase (218 aa).

Belongs to the IspD/TarI cytidylyltransferase family. IspD subfamily.

The catalysed reaction is 2-C-methyl-D-erythritol 4-phosphate + CTP + H(+) = 4-CDP-2-C-methyl-D-erythritol + diphosphate. It participates in isoprenoid biosynthesis; isopentenyl diphosphate biosynthesis via DXP pathway; isopentenyl diphosphate from 1-deoxy-D-xylulose 5-phosphate: step 2/6. In terms of biological role, catalyzes the formation of 4-diphosphocytidyl-2-C-methyl-D-erythritol from CTP and 2-C-methyl-D-erythritol 4-phosphate (MEP). The polypeptide is 2-C-methyl-D-erythritol 4-phosphate cytidylyltransferase (Chlamydia muridarum (strain MoPn / Nigg)).